Here is a 79-residue protein sequence, read N- to C-terminus: UPF0175 protein APE_0890a.1 (79 aa).

It belongs to the UPF0175 family.

In Aeropyrum pernix (strain ATCC 700893 / DSM 11879 / JCM 9820 / NBRC 100138 / K1), this protein is UPF0175 protein APE_0890a.1.